Consider the following 380-residue polypeptide: Cytochrome b (380 aa).

Transmembrane regions (helical) follow at residues 34–54, 78–99, 114–134, and 179–199; these read FGSLLGICLMTQILTGLLLAT, WLIRNLHANGASFFFICIYLHI, WNTGVILLLTLMATAFVGYVL, and FFALHFLLPFMIAGLTTIHLT. Heme b-binding residues include His-84 and His-98. Heme b-binding residues include His-183 and His-197. His-202 provides a ligand contact to a ubiquinone. 4 consecutive transmembrane segments (helical) span residues 227–247, 289–309, 321–341, and 348–368; these read LKDILGFTLMLLPLTILALFS, LGGVLALAASVLILFLTPFLH, ISQLLFWILVTNLLILTWVGS, and FIIIGQLASITYFTILLILFP.

It belongs to the cytochrome b family. As to quaternary structure, the cytochrome bc1 complex contains 11 subunits: 3 respiratory subunits (MT-CYB, CYC1 and UQCRFS1), 2 core proteins (UQCRC1 and UQCRC2) and 6 low-molecular weight proteins (UQCRH/QCR6, UQCRB/QCR7, UQCRQ/QCR8, UQCR10/QCR9, UQCR11/QCR10 and a cleavage product of UQCRFS1). This cytochrome bc1 complex then forms a dimer. Heme b is required as a cofactor.

It localises to the mitochondrion inner membrane. Its function is as follows. Component of the ubiquinol-cytochrome c reductase complex (complex III or cytochrome b-c1 complex) that is part of the mitochondrial respiratory chain. The b-c1 complex mediates electron transfer from ubiquinol to cytochrome c. Contributes to the generation of a proton gradient across the mitochondrial membrane that is then used for ATP synthesis. The polypeptide is Cytochrome b (MT-CYB) (Pelecanoides magellani (Magellanic diving petrel)).